We begin with the raw amino-acid sequence, 293 residues long: Ankyrin repeat and SOCS box protein 11 (293 aa).

ANK repeat units lie at residues 36–65 (DDRT…NVGM), 69–98 (DGIT…DANA), 102–131 (DGAT…AHHP), 134–163 (LLCS…NVDM), 167–196 (SVGT…DVQC), 199–228 (GLDT…DRTS), and 232–259 (EGKT…SLSQ). Positions 244–293 (SIKHLLQTAGTCSLSQLCRWCIRRSLGQKGLNKTKTLCLPHMLHNYLLYH) constitute an SOCS box domain.

Belongs to the ankyrin SOCS box (ASB) family. Substrate-recognition component of the ECS(ASB11) complex, composed of asb11, cul5, elob, eloc and rnf7/rbx2. In terms of tissue distribution, expressed in the developing nervous system: localizes to neural plate margins and is abutting the proneuronal zone.

The protein localises to the endoplasmic reticulum. Its pathway is protein modification; protein ubiquitination. Functionally, substrate-recognition component of a cullin-5-RING E3 ubiquitin-protein ligase complex (ECS complex, also named CRL5 complex), which mediates the ubiquitination and subsequent proteasomal degradation of target proteins. Acts as a regulator of the neuronal progenitor compartment size by maintaining the neural precursors in the proliferating undifferentiated state. The ECS(ASB11) complex acts as a positive regulator of Notch signaling pathway by mediating ubiquitination and degradation of DeltaA (dla). Also acts as a regulator of regenerative myogenesis. The protein is Ankyrin repeat and SOCS box protein 11 of Danio rerio (Zebrafish).